Consider the following 314-residue polypeptide: MGLLDSEPGSVLNVVSTALNDTVEFYRWTWSIADKRVENWPLMQSPWPTLSISTLYLLFVWLGPKWMKDREPFQMRLVLIIYNFGMVLLNFFIFRELFMGSYNAGYSYICQSVDYSNNVNEVRIAAALWWYFVSKGVEYLDTVFFILRKKNNQVSFLHVYHHCTMFTLWWIGIKWVAGGQAFFGAQMNSFIHVIMYSYYGLAAFGPWIQKYLWWKRYLTMLQLVQFHVTIGHTALSLYTDCPFPKWMHWALIAYAISFIFLFLNFYIRTYKEPKKPKTGKTAMNGISANGVSKSEKQLVIENGKKQKNGKAKGD.

N20 carries an N-linked (GlcNAc...) asparagine glycan. 7 helical membrane-spanning segments follow: residues 42–62, 78–98, 127–147, 165–185, 188–208, 217–237, and 247–267; these read LMQS…FVWL, VLII…RELF, ALWW…FFIL, MFTL…FFGA, NSFI…GPWI, YLTM…ALSL, and MHWA…NFYI. Residues 274 to 314 are disordered; sequence KKPKTGKTAMNGISANGVSKSEKQLVIENGKKQKNGKAKGD. Positions 293 to 304 are enriched in basic and acidic residues; sequence KSEKQLVIENGK. A compositionally biased stretch (basic residues) spans 305–314; the sequence is KQKNGKAKGD. Positions 310 to 314 match the Di-lysine motif motif; that stretch reads KAKGD.

This sequence belongs to the ELO family. ELOVL4 subfamily. As to quaternary structure, oligomer. N-glycosylated. In terms of tissue distribution, expressed mainly in retina. Also expressed in skin and thymus.

Its subcellular location is the endoplasmic reticulum membrane. It catalyses the reaction a very-long-chain acyl-CoA + malonyl-CoA + H(+) = a very-long-chain 3-oxoacyl-CoA + CO2 + CoA. The enzyme catalyses hexacosanoyl-CoA + malonyl-CoA + H(+) = 3-oxooctacosanyol-CoA + CO2 + CoA. The catalysed reaction is octacosanoyl-CoA + malonyl-CoA + H(+) = 3-oxo-triacontanoyl-CoA + CO2 + CoA. It carries out the reaction triacontanoyl-CoA + malonyl-CoA + H(+) = 3-oxo-dotriacontanoyl-CoA + CO2 + CoA. It catalyses the reaction (19Z,22Z,25Z,28Z,31Z)-tetratriacontapentaenoyl-CoA + malonyl-CoA + H(+) = 3-oxo-(21Z,24Z,27Z,30Z,33Z)-hexatriacontapentaenoyl-CoA + CO2 + CoA. The enzyme catalyses (4Z,7Z,10Z,13Z,16Z,19Z)-docosahexaenoyl-CoA + malonyl-CoA + H(+) = 3-oxo-(6Z,9Z,12Z,15Z,18Z,21Z)-tetracosahexaenoyl-CoA + CO2 + CoA. The catalysed reaction is (7Z,10Z,13Z,16Z)-docosatetraenoyl-CoA + malonyl-CoA + H(+) = (9Z,12Z,15Z,18Z)-3-oxotetracosatetraenoyl-CoA + CO2 + CoA. It carries out the reaction (11Z,14Z,17Z,20Z,23Z)-hexacosapentaenoyl-CoA + malonyl-CoA + H(+) = 3-oxo-(13Z,16Z,19Z,22Z,25Z)-octacosapentaenoyl-CoA + CO2 + CoA. It catalyses the reaction (13Z,16Z,19Z,22Z,25Z)-octacosapentaenoyl-CoA + malonyl-CoA + H(+) = 3-oxo-(15Z,18Z,21Z,24Z,27Z)-triacontapentaenoyl-CoA + CO2 + CoA. The enzyme catalyses (15Z,18Z,21Z,24Z,27Z)-triacontapentaenoyl-CoA + malonyl-CoA + H(+) = 3-oxo-(17Z,20Z,23Z,26Z,29Z)-dotriacontapentaenoyl-CoA + CO2 + CoA. The catalysed reaction is (17Z,20Z,23Z,26Z,29Z)-dotriacontapentaenoyl-CoA + malonyl-CoA + H(+) = 3-oxo-(19Z,22Z,25Z,28Z,31Z)-tetratriacontapentaenoyl-CoA + CO2 + CoA. It carries out the reaction (21Z,24Z,27Z,30Z,33Z)-hexatriacontapentaenoyl-CoA + malonyl-CoA + H(+) = 3-oxo-(23Z,26Z,29Z,32Z,35Z)-octatriacontapentaenoyl-CoA + CO2 + CoA. It catalyses the reaction (11Z,14Z,17Z,20Z)-hexacosatetraenoyl-CoA + malonyl-CoA + H(+) = (13Z,16Z,19Z,22Z)-3-oxooctacosatetraenoyl-CoA + CO2 + CoA. The enzyme catalyses (13Z,16Z,19Z,22Z)-octacosatetraenoyl-CoA + malonyl-CoA + H(+) = 3-oxo-(15Z,18Z,21Z,24Z)-triacontatetraenoyl-CoA + CO2 + CoA. The catalysed reaction is (15Z,18Z,21Z,24Z)-triacontatetraenoyl-CoA + malonyl-CoA + H(+) = 3-oxo-(17Z,20Z,23Z,26Z)-dotriacontatetraenoyl-CoA + CO2 + CoA. It carries out the reaction (17Z,20Z,23Z,26Z)-dotriacontatetraenoyl-CoA + malonyl-CoA + H(+) = 3-oxo-(19Z,22Z,25Z,28Z)-tetratriacontatetraenoyl-CoA + CO2 + CoA. It catalyses the reaction (19Z,22Z,25Z,28Z)-tetratriacontatetraenoyl-CoA + malonyl-CoA + H(+) = 3-oxo-(21Z,24Z,27Z,30Z)-hexatriacontatetraenoyl-CoA + CO2 + CoA. The enzyme catalyses (21Z,24Z,27Z,30Z)-hexatriacontatetraenoyl-CoA + malonyl-CoA + H(+) = 3-oxo-(23Z,26Z,29Z,32Z)-octatriacontatetraenoyl-CoA + CO2 + CoA. The catalysed reaction is (6Z,9Z,12Z,15Z,18Z,21Z)-tetracosahexaenoyl-CoA + malonyl-CoA + H(+) = 3-oxo-(8Z,11Z,14Z,17Z,20Z,23Z)-hexacosahexaenoyl-CoA + CO2 + CoA. It carries out the reaction (8Z,11Z,14Z,17Z,20Z,23Z)-hexacosahexaenoyl-CoA + malonyl-CoA + H(+) = 3-oxo-(10Z,13Z,16Z,19Z,22Z,25Z)-octacosahexaenoyl-CoA + CO2 + CoA. It catalyses the reaction (10Z,13Z,16Z,19Z,22Z,25Z)-octacosahexaenoyl-CoA + malonyl-CoA + H(+) = 3-oxo-(12Z,15Z,18Z,21Z,24Z,27Z)-triacontahexaenoyl-CoA + CO2 + CoA. The enzyme catalyses (12Z,15Z,18Z,21Z,24Z,27Z)-triacontahexaenoyl-CoA + malonyl-CoA + H(+) = 3-oxo-(14Z,17Z,20Z,23Z,26Z,29Z)-dotriacontahexaenoyl-CoA + CO2 + CoA. The catalysed reaction is (14Z,17Z,20Z,23Z,26Z,29Z)-dotriacontahexaenoyl-CoA + malonyl-CoA + H(+) = 3-oxo-(16Z,19Z,22Z,25Z,28Z,31Z)-tetratriacontahexaenoyl-CoA + CO2 + CoA. It carries out the reaction (16Z,19Z,22Z,25Z,28Z,31Z)-tetratriacontahexaenoyl-CoA + malonyl-CoA + H(+) = 3-oxo-(18Z,21Z,24Z,27Z,30Z,33Z)-hexatriacontahexaenoyl-CoA + CO2 + CoA. It catalyses the reaction (9Z,12Z,15Z,18Z,21Z)-tetracosapentaenoyl-CoA + malonyl-CoA + H(+) = 3-oxo-(11Z,14Z,17Z,20Z,23Z)-hexacosapentaenoyl-CoA + CO2 + CoA. It functions in the pathway lipid metabolism; fatty acid biosynthesis. Catalyzes the first and rate-limiting reaction of the four reactions that constitute the long-chain fatty acids elongation cycle. This endoplasmic reticulum-bound enzymatic process allows the addition of 2 carbons to the chain of long- and very long-chain fatty acids (VLCFAs) per cycle. Condensing enzyme that catalyzes the synthesis of very long chain saturated (VLC-SFA) and polyunsaturated (PUFA) fatty acids that are involved in multiple biological processes as precursors of membrane lipids and lipid mediators. May play a critical role in early brain and skin development. The polypeptide is Very long chain fatty acid elongase 4 (Macaca fascicularis (Crab-eating macaque)).